Consider the following 414-residue polypeptide: Histidine--tRNA ligase (414 aa).

Belongs to the class-II aminoacyl-tRNA synthetase family. Homodimer.

It is found in the cytoplasm. The catalysed reaction is tRNA(His) + L-histidine + ATP = L-histidyl-tRNA(His) + AMP + diphosphate + H(+). This Rickettsia rickettsii (strain Iowa) protein is Histidine--tRNA ligase.